A 360-amino-acid polypeptide reads, in one-letter code: DNA replication and repair protein RecF (360 aa).

Residue 30-37 participates in ATP binding; the sequence is GNNGSGKT.

Belongs to the RecF family.

Its subcellular location is the cytoplasm. Functionally, the RecF protein is involved in DNA metabolism; it is required for DNA replication and normal SOS inducibility. RecF binds preferentially to single-stranded, linear DNA. It also seems to bind ATP. This chain is DNA replication and repair protein RecF, found in Mannheimia succiniciproducens (strain KCTC 0769BP / MBEL55E).